The primary structure comprises 493 residues: Monocarboxylate transporter 1 (493 aa).

Residues 1–22 lie on the Cytoplasmic side of the membrane; that stretch reads MPPAIGGPVGYTPPDGGWGWAV. The helical transmembrane segment at 23-44 threads the bilayer; sequence LVGAFISIGFSYAFPKSITVFF. K38 is a binding site for (S)-lactate. The Extracellular segment spans residues 45–55; that stretch reads KEIEVIFSATT. The chain crosses the membrane as a helical span at residues 56 to 80; it reads SEVSWISSIMLAVMYAGGPISSILV. The Cytoplasmic portion of the chain corresponds to 81-84; it reads NKYG. The helical transmembrane segment at 85–105 threads the bilayer; that stretch reads SRPVMIAGGCLSGCGLIAASF. The Extracellular segment spans residues 106-109; it reads CNTV. The helical transmembrane segment at 110 to 132 threads the bilayer; the sequence is QELYLCIGVIGGLGLAFNLNPAL. Topologically, residues 133-146 are cytoplasmic; that stretch reads TMIGKYFYKKRPLA. Residues 147-169 traverse the membrane as a helical segment; it reads NGLAMAGSPVFLSTLAPLNQAFF. Topologically, residues 170–174 are extracellular; it reads DIFDW. Residues 175–194 traverse the membrane as a helical segment; that stretch reads RGSFLILGGLLLNCCVAGSL. At 195–254 the chain is on the cytoplasmic side; sequence MRPIGPEQVKLEKLKSKESLQEAGKSDANTDLIGGSPKGEKLSVFQTINKFLDLSLFTHR. S210, S213, and S220 each carry phosphoserine. T224 is subject to Phosphothreonine. S230 carries the post-translational modification Phosphoserine. A helical membrane pass occupies residues 255 to 281; the sequence is GFLLYLSGNVVMFFGLFTPLVFLSSYG. Residues 282–288 lie on the Extracellular side of the membrane; the sequence is KSKDFSS. A helical membrane pass occupies residues 289–310; sequence EKSAFLLSILAFVDMVARPSMG. D302 contacts H(+). A (S)-lactate-binding site is contributed by R306. The Cytoplasmic segment spans residues 311–321; sequence LAANTKWIRPR. Residues 322-342 traverse the membrane as a helical segment; the sequence is IQYFFAASVVANGVCHLLAPL. Over 343-346 the chain is Extracellular; sequence STTY. The chain crosses the membrane as a helical span at residues 347–368; sequence VGFCVYAGVFGFAFGWLSSVLF. Topologically, residues 369 to 382 are cytoplasmic; sequence ETLMDLIGPQRFSS. The chain crosses the membrane as a helical span at residues 383–403; that stretch reads AVGLVTIVECCPVLLGPPLLG. Residues 404–414 lie on the Extracellular side of the membrane; sequence RLNDMYGDYKY. The chain crosses the membrane as a helical span at residues 415-436; it reads TYWACGVILIIAGIYLFIGMGI. Residues 437-493 lie on the Cytoplasmic side of the membrane; sequence NYRLLAKEQKAEEKQKREGKEDEASTDVDEKPKETMKAAQSPQQHSSGDPTEEESPV. Residues 447–472 are compositionally biased toward basic and acidic residues; it reads AEEKQKREGKEDEASTDVDEKPKETM. A disordered region spans residues 447–493; sequence AEEKQKREGKEDEASTDVDEKPKETMKAAQSPQQHSSGDPTEEESPV. Phosphoserine is present on S461. T462 is modified (phosphothreonine). The segment covering 474–485 has biased composition (polar residues); it reads AAQSPQQHSSGD. Phosphoserine occurs at positions 477, 482, 483, and 491.

The protein belongs to the major facilitator superfamily. Monocarboxylate porter (TC 2.A.1.13) family. In terms of assembly, interacts with isoform 2 of BSG; interaction mediates SLC16A1 targeting to the plasma membrane. Interacts with EMB; interaction mediates SLC16A1 targeting to the plasma membrane. Detected in liver, brain, spinal cord, spermatozoa, muscle, white adipose tissue and brown adipose tissue (at protein level). Widely expressed, except in pancreas, where expression is not detectable.

It localises to the cell membrane. The protein localises to the basolateral cell membrane. It is found in the apical cell membrane. It catalyses the reaction (S)-lactate(in) + H(+)(in) = (S)-lactate(out) + H(+)(out). It carries out the reaction acetate(out) + H(+)(out) = acetate(in) + H(+)(in). The enzyme catalyses acetoacetate(out) + H(+)(out) = acetoacetate(in) + H(+)(in). The catalysed reaction is pyruvate(out) + H(+)(out) = pyruvate(in) + H(+)(in). It catalyses the reaction (R)-3-hydroxybutanoate(out) + H(+)(out) = (R)-3-hydroxybutanoate(in) + H(+)(in). It carries out the reaction 3-methyl-2-oxobutanoate(out) + H(+)(out) = 3-methyl-2-oxobutanoate(in) + H(+)(in). The enzyme catalyses 4-methyl-2-oxopentanoate(out) + H(+)(out) = 4-methyl-2-oxopentanoate(in) + H(+)(in). The catalysed reaction is succinate(in) + 2 H(+)(in) = succinate(out) + 2 H(+)(out). Bidirectional proton-coupled monocarboxylate transporter. Catalyzes the rapid transport across the plasma membrane of many monocarboxylates such as lactate, pyruvate, acetate and the ketone bodies acetoacetate and beta-hydroxybutyrate, and thus contributes to the maintenance of intracellular pH. The transport direction is determined by the proton motive force and the concentration gradient of the substrate monocarboxylate. MCT1 is a major lactate exporter. Plays a role in cellular responses to a high-fat diet by modulating the cellular levels of lactate and pyruvate that contribute to the regulation of central metabolic pathways and insulin secretion, with concomitant effects on plasma insulin levels and blood glucose homeostasis. Facilitates the protonated monocarboxylate form of succinate export, that its transient protonation upon muscle cell acidification in exercising muscle and ischemic heart. Functions via alternate outward- and inward-open conformation states. Protonation and deprotonation of 302-Asp is essential for the conformational transition. The protein is Monocarboxylate transporter 1 (Slc16a1) of Mus musculus (Mouse).